Reading from the N-terminus, the 225-residue chain is tRNA (guanine-N(7)-)-methyltransferase (225 aa).

S-adenosyl-L-methionine contacts are provided by Glu56, Glu81, Asp108, and Asp131. Asp131 is a catalytic residue. Residues Lys135, Asp167, and Thr204 to Glu207 each bind substrate.

This sequence belongs to the class I-like SAM-binding methyltransferase superfamily. TrmB family.

It catalyses the reaction guanosine(46) in tRNA + S-adenosyl-L-methionine = N(7)-methylguanosine(46) in tRNA + S-adenosyl-L-homocysteine. It functions in the pathway tRNA modification; N(7)-methylguanine-tRNA biosynthesis. Its function is as follows. Catalyzes the formation of N(7)-methylguanine at position 46 (m7G46) in tRNA. The polypeptide is tRNA (guanine-N(7)-)-methyltransferase (Legionella pneumophila (strain Corby)).